The chain runs to 161 residues: Thy-1 membrane glycoprotein (161 aa).

The signal sequence occupies residues Met1–Gly19. Gln20 carries the pyrrolidone carboxylic acid modification. The 107-residue stretch at Gln20–Lys126 folds into the Ig-like V-type domain. Disulfide bonds link Cys28–Cys130 and Cys38–Cys104. Asn42 and Asn79 each carry an N-linked (GlcNAc...) asparagine glycan. Ser82 carries the phosphoserine modification. An N-linked (GlcNAc...) asparagine glycan is attached at Asn119. Cys130 carries the GPI-anchor amidated cysteine; alternate lipid modification. The propeptide at Glu131 to Leu161 is removed in mature form. The N-linked (GlcNAc...) asparagine glycan is linked to Asn139.

The protein localises to the cell membrane. In terms of biological role, may play a role in cell-cell or cell-ligand interactions during synaptogenesis and other events in the brain. This chain is Thy-1 membrane glycoprotein (THY1), found in Homo sapiens (Human).